Consider the following 130-residue polypeptide: Arsenate reductase 2.2 (130 aa).

A Rhodanese domain is found at 18–119 (RDPRIAVVDV…WELSGRPVCR (102 aa)). The active-site Cysteine persulfide intermediate is the C70.

The catalysed reaction is [glutaredoxin]-dithiol + arsenate + glutathione + H(+) = glutathionyl-S-S-[glutaredoxin] + arsenite + H2O. Functionally, possesses arsenate reductase activity in vitro. Catalyzes the reduction of arsenate [As(V)] to arsenite [As(III)]. May play a role in arsenic retention in roots. Its function is as follows. Possesses phosphatase activity towards p-nitrophenyl phosphate in vitro. In Oryza sativa subsp. japonica (Rice), this protein is Arsenate reductase 2.2 (ACR2.2).